We begin with the raw amino-acid sequence, 444 residues long: S-locus-specific glycoprotein (444 aa).

The first 28 residues, 1–28 (MRGVIPNYHHSYTLFFFVILVLFPHVFS), serve as a signal peptide directing secretion. The 129-residue stretch at 31–159 (TLSPNEALTI…KTNDLDRFMW (129 aa)) folds into the Bulb-type lectin domain. Asn-43, Asn-125, Asn-243, and Asn-396 each carry an N-linked (GlcNAc...) asparagine glycan. A PAN domain is found at 356–437 (CGEGDGFLRM…GGQDLYVKVA (82 aa)). 2 disulfides stabilise this stretch: Cys-387-Cys-412 and Cys-395-Cys-397.

In terms of tissue distribution, stigma.

In terms of biological role, involved in sporophytic self-incompatibility system (the inability of flowering plants to achieve self-fertilization). The chain is S-locus-specific glycoprotein (SLSG) from Brassica oleracea var. alboglabra (Chinese kale).